A 964-amino-acid chain; its full sequence is GGISVPGPMGPSGPRGLPGPPGAPGPQGFQGPPGEPGEPGSGPMGPRGPPGPPGKNGDDGEAGKPGRPGERGPPGPQGARGLPGTAGLPGMKGHRGFSGLDGAKGDAGPAGPKQMGPRGPGERGRPGASGPAGARGNDGATGAAGPPGPTGPAGPPGFPGAVGAKGEAGPQGARGSEGPQGVRGEPGPPGPAGAAGPAGNPGADGQPGAKGANGAPGIAGAPGFPGARGPSGPQGPSGPPGPKGNSGEPGAPGSKAKGEPGPTGIQGPPGPAGEEGKRGARGEPGPTGLPGPPGERGGPGSRGFPGADGVAGPKGPAGERGSPGPAGPKGSPGEAGRPGEAGLPGAKGLTGSPGSPGPDGKTGPPGPAGQDGRPGPGPPGARGQAGVMGFPGPKGAAGEPGKAGERGVPGPPGAVGPAGKDGEAGAQGPPGPAGPAGERGEQGPAGPGFQGLPGPAGPPGEAGKPGEQGVPGDLGAPGPSGARGERGFPGERGVQGPPGPAGPRGLQGMPGERGAAGLPGPKGDRGDAGPKGADGAPGKDGVRGLTGPIGPPGPAGAPGDKGESGPSGPAGPTGARGAPGDRGEPGPPGPAGFAGPPGADGQPGAKGEPGDAGAKGDAGPPGPAGPTGPPGPIGNLGAPGPKGARGSAGPPGATGFPGAAGRVGPPGPSGNAGPPGPPGPVGKEGGKGPRGETGPAEVGPPGPPGPGEKGSPGADGPAGAPGTPGPQGISGQRGVVGLPGQRGERGFPGLPGPSGEPGKQGPSGSSGERGPPGPMGPPGLAGPPGESGREGPGAEGSPGRDGSPGPKGDRGETGPGPPGAPGAPGAPGPVGPAGKSGDRGETGPGPAGPAGPAGARGPAGPQGPRGDKGETGEQGDRGIKGHRGFSGLQGPAGPPGSPGEQGPSGASGPAGPRGPPGSAGSPGKDGLNGLPGPIGPPGPRGRTGDAGPVGPPGPPGPPGPPGPP.

Positions 1–964 are disordered; that stretch reads GGISVPGPMG…PGPPGPPGPP (964 aa). Proline 18, proline 21, proline 24, proline 33, proline 36, proline 39, proline 53, proline 68, proline 74, proline 83, and proline 89 each carry 4-hydroxyproline. Positions 56-70 are enriched in basic and acidic residues; it reads NGDDGEAGKPGRPGE. Lysine 92 carries the 5-hydroxylysine; alternate modification. An O-linked (Gal...) hydroxylysine; alternate glycan is attached at lysine 92. Serine 98 bears the Phosphoserine mark. Composition is skewed to low complexity over residues 106–117 and 126–144; these read DAGPAGPKQMGP and PGAS…TGAA. 4-hydroxyproline occurs at positions 126, 147, 156, 159, 186, 189, 201, 207, 216, 222, 225, and 240. A compositionally biased stretch (pro residues) spans 146-158; it reads PPGPTGPAGPPGF. Residues 192–231 are compositionally biased toward low complexity; that stretch reads AGAAGPAGNPGADGQPGAKGANGAPGIAGAPGFPGARGPS. At lysine 243 the chain carries 5-hydroxylysine. 8 positions are modified to 4-hydroxyproline: proline 249, proline 252, proline 260, proline 269, proline 284, proline 290, proline 299, and proline 305. A compositionally biased stretch (gly residues) spans 294–303; the sequence is GERGGPGSRG. 5-hydroxylysine is present on lysine 314. A 4-hydroxyproline mark is found at proline 323, proline 332, proline 338, proline 344, proline 353, proline 356, proline 365, proline 374, proline 379, proline 391, proline 400, proline 409, proline 412, proline 430, proline 447, proline 453, proline 459, proline 465, proline 471, proline 477, proline 489, proline 498, proline 510, and proline 519. The span at 347-373 shows a compositional bias: low complexity; that stretch reads KGLTGSPGSPGPDGKTGPPGPAGQDGR. The span at 381-400 shows a compositional bias: low complexity; the sequence is ARGQAGVMGFPGPKGAAGEP. Residues 459-468 show a composition bias toward low complexity; sequence PGEAGKPGEQ. The residue at position 531 (lysine 531) is a 5-hydroxylysine. 4-hydroxyproline occurs at positions 537, 552, and 558. The span at 564–578 shows a compositional bias: low complexity; that stretch reads SGPSGPAGPTGARGA. Position 567 is a phosphoserine (serine 567). 4-hydroxyproline occurs at positions 579, 585, 588, 597, 603, 621, 630, and 639. Residues 591 to 618 are compositionally biased toward low complexity; sequence AGFAGPPGADGQPGAKGEPGDAGAKGDA. A compositionally biased stretch (pro residues) spans 620–632; it reads PPGPAGPTGPPGP. At lysine 642 the chain carries 5-hydroxylysine. Positions 647–663 are enriched in low complexity; it reads SAGPPGATGFPGAAGRV. Residues proline 651 and proline 657 each carry the 4-hydroxyproline modification. The residue at position 665 (proline 665) is a 3-hydroxyproline. 15 positions are modified to 4-hydroxyproline: proline 666, proline 675, proline 678, proline 704, proline 712, proline 721, proline 739, proline 748, proline 751, proline 757, proline 772, proline 778, proline 784, proline 792, and proline 798. The segment covering 709–721 has biased composition (low complexity); sequence KGSPGADGPAGAP. A compositionally biased stretch (pro residues) spans 771 to 781; that stretch reads PPGPMGPPGLA. Lysine 807 carries the post-translational modification 5-hydroxylysine. Residues 815-830 show a composition bias toward pro residues; sequence PGPPGAPGAPGAPGPV. 4-hydroxyproline is present on residues proline 818, proline 821, and proline 824. Low complexity predominate over residues 850–864; sequence AGPAGARGPAGPQGP. Positions 865 to 879 are enriched in basic and acidic residues; that stretch reads RGDKGETGEQGDRGI. A 5-hydroxylysine modification is found at lysine 868. Lysine 880 is modified (5-hydroxylysine; alternate). Lysine 880 carries O-linked (Gal...) hydroxylysine; alternate glycosylation. 4 positions are modified to 4-hydroxyproline: proline 895, proline 898, proline 916, and proline 931. Residues 898–931 show a composition bias toward low complexity; that stretch reads PGEQGPSGASGPAGPRGPPGSAGSPGKDGLNGLP. At proline 936 the chain carries 3-hydroxyproline. A 4-hydroxyproline modification is found at proline 937. Residues 949–964 show a composition bias toward pro residues; it reads VGPPGPPGPPGPPGPP. A 3-hydroxyproline modification is found at proline 951. Proline 952 bears the 4-hydroxyproline mark. Residue proline 954 is modified to 3-hydroxyproline. Residue proline 955 is modified to 4-hydroxyproline. At proline 957 the chain carries 3-hydroxyproline. A 4-hydroxyproline mark is found at proline 958, proline 961, and proline 964.

It belongs to the fibrillar collagen family. As to quaternary structure, trimers of one alpha 2(I) and two alpha 1(I) chains. Contains mostly 4-hydroxyproline. Proline residues at the third position of the tripeptide repeating unit (G-X-Y) are hydroxylated in some or all of the chains. In terms of processing, contains 3-hydroxyproline at a few sites. This modification occurs on the first proline residue in the sequence motif Gly-Pro-Hyp, where Hyp is 4-hydroxyproline. Post-translationally, lysine residues at the third position of the tripeptide repeating unit (G-X-Y) are 5-hydroxylated in some or all of the chains. O-glycosylated on hydroxylated lysine residues. The O-linked glycan consists of a Glc-Gal disaccharide. As to expression, expressed in bones.

It is found in the secreted. The protein resides in the extracellular space. The protein localises to the extracellular matrix. Functionally, type I collagen is a member of group I collagen (fibrillar forming collagen). The polypeptide is Collagen alpha-1(I) chain (Parocnus serus (Greater Haitian ground sloth)).